Consider the following 330-residue polypeptide: MIKAAVVGASGYIGGELVRLLAMHPEVEITAITSRRFAGQKVHKVHPNLRGLDLRFTNTKEFDADVIFLAVPHGTSMEIIDDYLGSAKIIDMSADFRLREDLYREYYGEHKRPELIEEFVYGLPELHRKEIRKAELVANPGCNATATILALYPFRELTDEAIVDLKVSSSAGGRRENVASIHPERSHVVRVYKPYHHRHEGEVIQETGVKAAFTVHSVDIIRGLLATIYFRFEGSTRELLRKLLVYKDEPFVRLVTDKGGLQRFPDPKYVIGSNFADIGFAHDEENSRAIVLSAIDNLIKGGSGQAVQNMNLMFGLDERTGLNYYPVYPV.

Residues 10–13 (SGYI) and 34–36 (SRR) each bind NADP(+). Cysteine 142 is a catalytic residue. Residue asparagine 297 coordinates NADP(+).

Belongs to the NAGSA dehydrogenase family. Type 1 subfamily. LysY sub-subfamily.

The protein localises to the cytoplasm. It carries out the reaction [amino-group carrier protein]-C-terminal-N-(1-carboxy-5-oxopentan-1-yl)-L-glutamine + phosphate + NADP(+) = [amino-group carrier protein]-C-terminal-N-(1-carboxy-5-phosphooxy-5-oxopentan-1-yl)-L-glutamine + NADPH + H(+). It catalyses the reaction [amino-group carrier protein]-C-terminal-gamma-(L-glutamyl-5-semialdehyde)-L-glutamate + phosphate + NADP(+) = [amino-group carrier protein]-C-terminal-gamma-(5-phospho-L-glutamyl)-L-glutamate + NADPH + H(+). It functions in the pathway amino-acid biosynthesis; L-lysine biosynthesis via AAA pathway; L-lysine from L-alpha-aminoadipate (Thermus route): step 3/5. The protein operates within amino-acid biosynthesis; L-arginine biosynthesis. In terms of biological role, involved in both the arginine and lysine biosynthetic pathways. This chain is Putative [LysW]-L-2-aminoadipate/[LysW]-L-glutamate phosphate reductase, found in Thermococcus kodakarensis (strain ATCC BAA-918 / JCM 12380 / KOD1) (Pyrococcus kodakaraensis (strain KOD1)).